A 2133-amino-acid polypeptide reads, in one-letter code: Coagulation factor VIII (2133 aa).

A signal peptide spans 1–19 (MQLELSTCVFLCLLPLGFS). 4 Plastocyanin-like domains span residues 20-199 (AIRR…LLVC), 207-357 (ERTQ…QLRR), 399-573 (KTWV…LLIC), and 583-730 (NQMM…VYSC). 2 F5/8 type A domains span residues 20 to 357 (AIRR…QLRR) and 399 to 730 (KTWV…VYSC). Cys173 and Cys199 are oxidised to a cystine. 2 N-linked (GlcNAc...) asparagine glycosylation sites follow: Asn233 and Asn259. A disulfide bridge links Cys547 with Cys573. Asn601 carries N-linked (GlcNAc...) asparagine glycosylation. Tyr737, Tyr738, and Tyr742 each carry sulfotyrosine. 2 disordered regions span residues 760 to 790 (SFAQNSRPPSASQKQFQTITSPEDDVELDPQ) and 804 to 914 (PSGD…PHPQ). The tract at residues 760 to 1599 (SFAQNSRPPS…LISYPDDQEQ (840 aa)) is b. Over residues 761-780 (FAQNSRPPSASQKQFQTITS) the composition is skewed to polar residues. 2 stretches are compositionally biased toward basic and acidic residues: residues 853-862 (LRPELHHSAE) and 868-878 (EPEKELKKLDS). The span at 879-888 (KMSSSSDLLK) shows a compositional bias: low complexity. A compositionally biased stretch (polar residues) spans 889 to 900 (TSPTIPSDTLSA). 3 N-linked (GlcNAc...) asparagine glycosylation sites follow: Asn929, Asn985, and Asn1025. The segment at 1042–1078 (LGKNPLSSERGPSPELLTSSGSGKSVKGQSSGQGRIR) is disordered. A compositionally biased stretch (low complexity) spans 1060-1075 (SSGSGKSVKGQSSGQG). The N-linked (GlcNAc...) asparagine glycan is linked to Asn1111. Positions 1160–1179 (PSVEGFDGGSHAPVPQDSRS) are disordered. 5 N-linked (GlcNAc...) asparagine glycosylation sites follow: Asn1181, Asn1208, Asn1245, Asn1265, and Asn1335. The interval 1200-1221 (EAPLEAPGNRTGPGPRSAVPRR) is disordered. 2 disordered regions span residues 1358–1391 (LNKVNRPGRTPSKLLGPPMPKEWESLEKSPKSTA) and 1406–1441 (ESNHSIAAKNEGQAETQREAAWTKQGGPGRLCAPKP). Residues 1378–1387 (KEWESLEKSP) are compositionally biased toward basic and acidic residues. N-linked (GlcNAc...) asparagine glycans are attached at residues Asn1408 and Asn1611. 2 Plastocyanin-like domains span residues 1495 to 1659 (RTRH…LLIC) and 1669 to 1822 (GRQV…SKEC). The F5/8 type A 3 domain occupies 1495 to 1822 (RTRHYFIAAV…TTFLVYSKEC (328 aa)). 3 cysteine pairs are disulfide-bonded: Cys1633–Cys1659, Cys1822–Cys1970, and Cys1975–Cys2127. 2 F5/8 type C domains span residues 1822–1970 (CQAP…LMGC) and 1975–2127 (CSMP…VLGC). The N-linked (GlcNAc...) asparagine glycan is linked to Asn1919.

Belongs to the multicopper oxidase family. Interacts with vWF. vWF binding is essential for the stabilization of F8 in circulation. Post-translationally, proteolytically cleaved by cathepsin CTSG to produce a partially activated form.

Its subcellular location is the secreted. It is found in the extracellular space. Its function is as follows. Factor VIII, along with calcium and phospholipid, acts as a cofactor for factor IXa when it converts factor X to the activated form, factor Xa. This chain is Coagulation factor VIII (F8), found in Sus scrofa (Pig).